The chain runs to 238 residues: Major prion protein (238 aa).

The signal sequence occupies residues 1 to 15 (MLVLFVATWSDLGLC). An interaction with GRB2, ERI3 and SYN1 region spans residues 16–215 (KKRPKPGGWN…ESQAYYQRGS (200 aa)). The interval 18-93 (RPKPGGWNTG…WHKPSKPKTS (76 aa)) is disordered. 4 repeat units span residues 44–52 (PQGGGGWGQ), 53–60 (PHGGGWGQ), 61–68 (PHGGGWGQ), and 69–76 (PHGGGWGQ). A 4 X 8 AA tandem repeats of P-H-G-G-G-W-G-Q region spans residues 44–76 (PQGGGGWGQPHGGGWGQPHGGGWGQPHGGGWGQ). The span at 45-80 (QGGGGWGQPHGGGWGQPHGGGWGQPHGGGWGQGGGT) shows a compositional bias: gly residues. The Cu(2+) site is built by G47, G48, H54, G55, G56, H62, G63, G64, H70, G71, and G72. The segment covering 83–93 (QWHKPSKPKTS) has biased composition (basic residues). C164 and C199 form a disulfide bridge. N166 and N182 each carry an N-linked (GlcNAc...) asparagine glycan. Residue S215 is the site of GPI-anchor amidated serine attachment. A propeptide spans 216–238 (SMVLFSSPPVILLISFLIFLIVG) (removed in mature form).

This sequence belongs to the prion family. In terms of assembly, monomer and homodimer. Has a tendency to aggregate into amyloid fibrils containing a cross-beta spine, formed by a steric zipper of superposed beta-strands. Soluble oligomers may represent an intermediate stage on the path to fibril formation. Copper binding may promote oligomerization. Interacts with GRB2, APP, ERI3/PRNPIP and SYN1. Mislocalized cytosolically exposed PrP interacts with MGRN1; this interaction alters MGRN1 subcellular location and causes lysosomal enlargement. Interacts with KIAA1191.

The protein localises to the cell membrane. It localises to the golgi apparatus. Its primary physiological function is unclear. Has cytoprotective activity against internal or environmental stresses. May play a role in neuronal development and synaptic plasticity. May be required for neuronal myelin sheath maintenance. May play a role in iron uptake and iron homeostasis. Soluble oligomers are toxic to cultured neuroblastoma cells and induce apoptosis (in vitro). Association with GPC1 (via its heparan sulfate chains) targets PRNP to lipid rafts. Also provides Cu(2+) or Zn(2+) for the ascorbate-mediated GPC1 deaminase degradation of its heparan sulfate side chains. This is Major prion protein (PRNP) from Macaca sylvanus (Barbary macaque).